The following is a 378-amino-acid chain: UDP-N-acetylglucosamine--N-acetylmuramyl-(pentapeptide) pyrophosphoryl-undecaprenol N-acetylglucosamine transferase (378 aa).

UDP-N-acetyl-alpha-D-glucosamine-binding positions include 14–16 (TGG), N125, R165, S193, and Q293.

The protein belongs to the glycosyltransferase 28 family. MurG subfamily.

It localises to the cell inner membrane. The enzyme catalyses di-trans,octa-cis-undecaprenyl diphospho-N-acetyl-alpha-D-muramoyl-L-alanyl-D-glutamyl-meso-2,6-diaminopimeloyl-D-alanyl-D-alanine + UDP-N-acetyl-alpha-D-glucosamine = di-trans,octa-cis-undecaprenyl diphospho-[N-acetyl-alpha-D-glucosaminyl-(1-&gt;4)]-N-acetyl-alpha-D-muramoyl-L-alanyl-D-glutamyl-meso-2,6-diaminopimeloyl-D-alanyl-D-alanine + UDP + H(+). Its pathway is cell wall biogenesis; peptidoglycan biosynthesis. In terms of biological role, cell wall formation. Catalyzes the transfer of a GlcNAc subunit on undecaprenyl-pyrophosphoryl-MurNAc-pentapeptide (lipid intermediate I) to form undecaprenyl-pyrophosphoryl-MurNAc-(pentapeptide)GlcNAc (lipid intermediate II). This chain is UDP-N-acetylglucosamine--N-acetylmuramyl-(pentapeptide) pyrophosphoryl-undecaprenol N-acetylglucosamine transferase, found in Bartonella quintana (strain Toulouse) (Rochalimaea quintana).